The following is a 263-amino-acid chain: Probable HTH-type transcriptional regulator ArcR (263 aa).

In terms of domain architecture, HTH iclR-type spans 14–74; that stretch reads ITSVLNAVEI…DGDGTYQLGD (61 aa). Positions 35-54 form a DNA-binding region, H-T-H motif; sequence LQELTTELDLTKATIHTYMA. Residues 89-262 form the IclR-ED domain; that stretch reads LYRLGREEID…ANIIEVRLET (174 aa).

In terms of biological role, probably regulates transcription of the arcABC operon. This Halobacterium salinarum (strain ATCC 29341 / DSM 671 / R1) protein is Probable HTH-type transcriptional regulator ArcR (arcR).